The primary structure comprises 138 residues: Acidic phospholipase A2 1 (138 aa).

Positions 1 to 16 (MRTLWIVAVWLMGVEG) are cleaved as a signal peptide. 7 disulfide bridges follow: Cys-42–Cys-131, Cys-44–Cys-60, Cys-59–Cys-111, Cys-65–Cys-138, Cys-66–Cys-104, Cys-73–Cys-97, and Cys-91–Cys-102. Residues Tyr-43, Gly-45, and Gly-47 each contribute to the Ca(2+) site. The active site involves His-63. Asp-64 contacts Ca(2+). The active site involves Asp-105.

Monomer. The cofactor is Ca(2+). As to expression, expressed by the venom gland.

It is found in the secreted. The catalysed reaction is a 1,2-diacyl-sn-glycero-3-phosphocholine + H2O = a 1-acyl-sn-glycero-3-phosphocholine + a fatty acid + H(+). Its function is as follows. Snake venom phospholipase that inhibits ADP- and collagen-induced human platelet aggregation. This inhibition is completely inhibited by abolition of catalytic activity in case of collagen as inducer and partially inhibited in case of ADP as inducer. PLA2 catalyzes the calcium-dependent hydrolysis of the 2-acyl groups in 3-sn-phosphoglycerides. This chain is Acidic phospholipase A2 1, found in Macrovipera lebetinus (Levantine viper).